Reading from the N-terminus, the 47-residue chain is MKKITGIILLLLAVIILAACQANYIRDVQGGTVSPSSTAEVTGLATQ.

Positions 1–19 (MKKITGIILLLLAVIILAA) are cleaved as a signal peptide. Residue cysteine 20 is the site of N-palmitoyl cysteine attachment. Cysteine 20 carries the S-diacylglycerol cysteine lipid modification.

The protein localises to the cell outer membrane. Functionally, lysis proteins are required for both colicin release and partial cell lysis. This is Lysis protein for colicin E8 (lys) from Escherichia coli.